The following is a 195-amino-acid chain: MQNRIAKIERNTSETKVKIDINLDGTGLNKIHTGIGFLDHMLELFSFHSNTDVYLSCDGDLNVCDHHSVEDVGIIFGKAFKEALGDKKGINRYGTFFLPMDEVLSLISLDISGRGFLVFDCEFTREKVGELSTEMIEEFFRAFALNSEITLHCKVLYGKNDHHKIESLFKGFGRALRDAKERNELNKVPSTKGIL.

Belongs to the imidazoleglycerol-phosphate dehydratase family.

Its subcellular location is the cytoplasm. The catalysed reaction is D-erythro-1-(imidazol-4-yl)glycerol 3-phosphate = 3-(imidazol-4-yl)-2-oxopropyl phosphate + H2O. It participates in amino-acid biosynthesis; L-histidine biosynthesis; L-histidine from 5-phospho-alpha-D-ribose 1-diphosphate: step 6/9. This Clostridium botulinum (strain Alaska E43 / Type E3) protein is Imidazoleglycerol-phosphate dehydratase.